The primary structure comprises 70 residues: Large ribosomal subunit protein bL31 (70 aa).

Zn(2+)-binding residues include cysteine 16, cysteine 18, cysteine 37, and cysteine 40.

Belongs to the bacterial ribosomal protein bL31 family. Type A subfamily. As to quaternary structure, part of the 50S ribosomal subunit. The cofactor is Zn(2+).

In terms of biological role, binds the 23S rRNA. This chain is Large ribosomal subunit protein bL31, found in Shewanella halifaxensis (strain HAW-EB4).